The following is a 117-amino-acid chain: Large ribosomal subunit protein bL17 (117 aa).

It belongs to the bacterial ribosomal protein bL17 family. Part of the 50S ribosomal subunit. Contacts protein L32.

This Exiguobacterium sp. (strain ATCC BAA-1283 / AT1b) protein is Large ribosomal subunit protein bL17.